We begin with the raw amino-acid sequence, 246 residues long: Mitochondrial inner membrane protease ATP23 homolog (246 aa).

Position 125 (His125) interacts with a divalent metal cation. Glu126 is a catalytic residue. Position 129 (His129) interacts with a divalent metal cation.

The protein belongs to the peptidase M76 family. In terms of assembly, interacts with XRCC6.

In Homo sapiens (Human), this protein is Mitochondrial inner membrane protease ATP23 homolog.